Here is a 168-residue protein sequence, read N- to C-terminus: Phosphopantetheine adenylyltransferase (168 aa).

Substrate is bound at residue T14. ATP contacts are provided by residues 14-15 (TF) and H22. 3 residues coordinate substrate: K46, L78, and R92. Residues 93–95 (GLR), E103, and 128–134 (YSFISSS) contribute to the ATP site.

The protein belongs to the bacterial CoaD family. As to quaternary structure, homohexamer. Mg(2+) serves as cofactor.

It localises to the cytoplasm. It carries out the reaction (R)-4'-phosphopantetheine + ATP + H(+) = 3'-dephospho-CoA + diphosphate. It functions in the pathway cofactor biosynthesis; coenzyme A biosynthesis; CoA from (R)-pantothenate: step 4/5. Its function is as follows. Reversibly transfers an adenylyl group from ATP to 4'-phosphopantetheine, yielding dephospho-CoA (dPCoA) and pyrophosphate. This is Phosphopantetheine adenylyltransferase from Xanthomonas axonopodis pv. citri (strain 306).